We begin with the raw amino-acid sequence, 464 residues long: tRNA modification GTPase MnmE (464 aa).

Residues Arg-27, Glu-89, and Arg-128 each contribute to the (6S)-5-formyl-5,6,7,8-tetrahydrofolate site. The TrmE-type G domain maps to 225-384; it reads GLATAIIGHP…LEDRIAAMFF (160 aa). Residue Asn-235 coordinates K(+). GTP-binding positions include 235-240, 254-260, and 279-282; these read NVGKSS, TDVAGTT, and DTAG. Residue Ser-239 coordinates Mg(2+). Residues Thr-254, Val-256, and Thr-259 each coordinate K(+). Thr-260 lines the Mg(2+) pocket. Lys-464 serves as a coordination point for (6S)-5-formyl-5,6,7,8-tetrahydrofolate.

It belongs to the TRAFAC class TrmE-Era-EngA-EngB-Septin-like GTPase superfamily. TrmE GTPase family. As to quaternary structure, homodimer. Heterotetramer of two MnmE and two MnmG subunits. K(+) serves as cofactor.

It localises to the cytoplasm. In terms of biological role, exhibits a very high intrinsic GTPase hydrolysis rate. Involved in the addition of a carboxymethylaminomethyl (cmnm) group at the wobble position (U34) of certain tRNAs, forming tRNA-cmnm(5)s(2)U34. The protein is tRNA modification GTPase MnmE of Pediococcus pentosaceus (strain ATCC 25745 / CCUG 21536 / LMG 10740 / 183-1w).